We begin with the raw amino-acid sequence, 424 residues long: Histidine--tRNA ligase (424 aa).

It belongs to the class-II aminoacyl-tRNA synthetase family. Homodimer.

Its subcellular location is the cytoplasm. It carries out the reaction tRNA(His) + L-histidine + ATP = L-histidyl-tRNA(His) + AMP + diphosphate + H(+). The chain is Histidine--tRNA ligase from Shewanella piezotolerans (strain WP3 / JCM 13877).